A 326-amino-acid polypeptide reads, in one-letter code: Iron-sulfur cluster assembly SufBD family protein PH0883 (326 aa).

It belongs to the iron-sulfur cluster assembly SufBD family.

The chain is Iron-sulfur cluster assembly SufBD family protein PH0883 from Pyrococcus horikoshii (strain ATCC 700860 / DSM 12428 / JCM 9974 / NBRC 100139 / OT-3).